We begin with the raw amino-acid sequence, 975 residues long: Glycine dehydrogenase (decarboxylating) (975 aa).

The residue at position 723 (Lys-723) is an N6-(pyridoxal phosphate)lysine.

Belongs to the GcvP family. The glycine cleavage system is composed of four proteins: P, T, L and H. The cofactor is pyridoxal 5'-phosphate.

It catalyses the reaction N(6)-[(R)-lipoyl]-L-lysyl-[glycine-cleavage complex H protein] + glycine + H(+) = N(6)-[(R)-S(8)-aminomethyldihydrolipoyl]-L-lysyl-[glycine-cleavage complex H protein] + CO2. Functionally, the glycine cleavage system catalyzes the degradation of glycine. The P protein binds the alpha-amino group of glycine through its pyridoxal phosphate cofactor; CO(2) is released and the remaining methylamine moiety is then transferred to the lipoamide cofactor of the H protein. The protein is Glycine dehydrogenase (decarboxylating) of Burkholderia multivorans (strain ATCC 17616 / 249).